The sequence spans 154 residues: Transcriptional repressor NrdR (154 aa).

Residues 3–34 fold into a zinc finger; that stretch reads CPFCRHPDSRVVDSREADEGQAIRRRRSCPEC. In terms of domain architecture, ATP-cone spans 46 to 136; the sequence is LSVVKRSGVT…VYRSFSSAED (91 aa).

Belongs to the NrdR family. It depends on Zn(2+) as a cofactor.

Negatively regulates transcription of bacterial ribonucleotide reductase nrd genes and operons by binding to NrdR-boxes. In Rhodococcus jostii (strain RHA1), this protein is Transcriptional repressor NrdR.